The sequence spans 476 residues: Glutathione synthetase (476 aa).

Position 117 (Arg-117) interacts with substrate. ATP is bound at residue Glu-137. 2 residues coordinate Mg(2+): Glu-137 and Asn-139. Substrate-binding positions include 141 to 144 (ISSS), 211 to 213 (ERN), Gln-217, and 267 to 270 (RAGY). ATP is bound by residues Lys-308, 367-376 (KPQREGGGNN), Tyr-378, 400-403 (MDKI), and Glu-426. Residue Glu-371 participates in Mg(2+) binding. Arg-452 contributes to the substrate binding site. ATP-binding residues include Lys-454 and Glu-460. 463–464 (VA) lines the substrate pocket.

This sequence belongs to the eukaryotic GSH synthase family. Homodimer. Mg(2+) is required as a cofactor.

It catalyses the reaction gamma-L-glutamyl-L-cysteine + glycine + ATP = glutathione + ADP + phosphate + H(+). The protein operates within sulfur metabolism; glutathione biosynthesis; glutathione from L-cysteine and L-glutamate: step 2/2. This is Glutathione synthetase (gshB) from Dictyostelium discoideum (Social amoeba).